The following is a 335-amino-acid chain: NADH-quinone oxidoreductase subunit H (335 aa).

The next 8 helical transmembrane spans lie at 11 to 31 (VILT…AGAL), 81 to 101 (VIFT…FAII), 114 to 134 (IGLL…LFAG), 154 to 174 (VSYE…VGSF), 187 to 207 (LWFI…GVAV), 238 to 258 (FFVG…TLFF), 270 to 290 (QLSF…FILL), and 307 to 327 (WKFC…VVLW).

It belongs to the complex I subunit 1 family. NDH-1 is composed of 13 different subunits. Subunits NuoA, H, J, K, L, M, N constitute the membrane sector of the complex.

The protein localises to the cell inner membrane. The enzyme catalyses a quinone + NADH + 5 H(+)(in) = a quinol + NAD(+) + 4 H(+)(out). In terms of biological role, NDH-1 shuttles electrons from NADH, via FMN and iron-sulfur (Fe-S) centers, to quinones in the respiratory chain. The immediate electron acceptor for the enzyme in this species is believed to be ubiquinone. Couples the redox reaction to proton translocation (for every two electrons transferred, four hydrogen ions are translocated across the cytoplasmic membrane), and thus conserves the redox energy in a proton gradient. This subunit may bind ubiquinone. The protein is NADH-quinone oxidoreductase subunit H of Pseudomonas fluorescens (strain ATCC BAA-477 / NRRL B-23932 / Pf-5).